Consider the following 335-residue polypeptide: MSATISLQQLTDQLDALEAEAVSAIAAAADADALEQLRVSLLGKKGRLSGVLGAMGKLPSEERPLVGQRANVLKTQVQNLLGERLQVVKAAALADRLLQETIDVTAPASGIPVGHRHPLITTTEQIVDLFSGLGYRVAEGPEVETDHYNFSALNIPEDHPARDMQDTFYLGGNLLLRTHTSPVQIRYLEENPPPVRIVAPGRVYRRDAVDATHSPVFHQVEVLAIDEGLDFSHLRGTVMAFLKAFFGDMPVRFRASYFPFTEPSAEVDVQWRGRWLEVMGCGMVDPAVLEGLGLDPERWSGFAAGLGVERFCMVRHGIDDIRRLYTSDLRFLEQF.

Glu262 contacts Mg(2+).

Belongs to the class-II aminoacyl-tRNA synthetase family. Phe-tRNA synthetase alpha subunit type 1 subfamily. As to quaternary structure, tetramer of two alpha and two beta subunits. Mg(2+) serves as cofactor.

The protein resides in the cytoplasm. It catalyses the reaction tRNA(Phe) + L-phenylalanine + ATP = L-phenylalanyl-tRNA(Phe) + AMP + diphosphate + H(+). This is Phenylalanine--tRNA ligase alpha subunit from Prochlorococcus marinus (strain MIT 9313).